We begin with the raw amino-acid sequence, 1489 residues long: DEAD-box ATP-dependent DNA helicase Fancm (1489 aa).

Residues I65–N237 form the Helicase ATP-binding domain. L78–T85 contributes to the ATP binding site. Positions D185–H188 match the DEAH box motif. The Helicase C-terminal domain maps to K418 to N584. Disordered regions lie at residues K591–Q647, V980–H1000, T1145–K1182, V1196–E1222, N1255–A1293, and E1452–D1489. Basic and acidic residues predominate over residues P594 to K610. The segment covering P611 to Q625 has biased composition (basic residues). Residues R985–S998 are compositionally biased toward polar residues. Residues K1149–S1161 show a composition bias toward basic and acidic residues. The segment covering S1480–D1489 has biased composition (acidic residues).

Belongs to the DEAD box helicase family. DEAH subfamily. FANCM sub-subfamily.

The protein resides in the nucleus. It catalyses the reaction ATP + H2O = ADP + phosphate + H(+). The enzyme catalyses Couples ATP hydrolysis with the unwinding of duplex DNA by translocating in the 3'-5' direction.. A ssDNA-dependent ATPase with 3' to 5' helicase activity. Involved in multiple DNA-damage responses, some that require ATPase and helicase activity and some that are independent of these. Involved in DNA interstrand cross-link repair, probably together with Fancl and other Fanconi anemia pathway homologs. Independent of Fancl involved in DNA double strand break repair, including contributing to the synthesis-dependent strand annealing (SDSA) pathway. Probably contributes to SDSA by unwinding short duplex regions in complex D-loop-like DNA structures. This Drosophila melanogaster (Fruit fly) protein is DEAD-box ATP-dependent DNA helicase Fancm.